A 342-amino-acid polypeptide reads, in one-letter code: GTPase Obg (342 aa).

Residues 1-159 (MQFIDRAEIE…RNLRLELKLL (159 aa)) form the Obg domain. One can recognise an OBG-type G domain in the interval 160–328 (AEVGIIGLPN…LLQAIWHRLD (169 aa)). GTP contacts are provided by residues 166 to 173 (GLPNAGKS), 191 to 195 (FTTLV), 213 to 216 (DIPG), 280 to 283 (NKVD), and 309 to 311 (SAV). 2 residues coordinate Mg(2+): serine 173 and threonine 193.

It belongs to the TRAFAC class OBG-HflX-like GTPase superfamily. OBG GTPase family. In terms of assembly, monomer. Requires Mg(2+) as cofactor.

It is found in the cytoplasm. Functionally, an essential GTPase which binds GTP, GDP and possibly (p)ppGpp with moderate affinity, with high nucleotide exchange rates and a fairly low GTP hydrolysis rate. Plays a role in control of the cell cycle, stress response, ribosome biogenesis and in those bacteria that undergo differentiation, in morphogenesis control. This Crocosphaera subtropica (strain ATCC 51142 / BH68) (Cyanothece sp. (strain ATCC 51142)) protein is GTPase Obg.